A 453-amino-acid polypeptide reads, in one-letter code: Phosphoglucosamine mutase (453 aa).

S108 functions as the Phosphoserine intermediate in the catalytic mechanism. Residues S108, D247, D249, and D251 each coordinate Mg(2+). S108 carries the post-translational modification Phosphoserine.

This sequence belongs to the phosphohexose mutase family. Requires Mg(2+) as cofactor. Activated by phosphorylation.

The catalysed reaction is alpha-D-glucosamine 1-phosphate = D-glucosamine 6-phosphate. In terms of biological role, catalyzes the conversion of glucosamine-6-phosphate to glucosamine-1-phosphate. The sequence is that of Phosphoglucosamine mutase from Methylobacillus flagellatus (strain ATCC 51484 / DSM 6875 / VKM B-1610 / KT).